The following is a 1411-amino-acid chain: DNA-directed RNA polymerase subunit beta' (1411 aa).

Cys69, Cys71, Cys84, and Cys87 together coordinate Zn(2+). 3 residues coordinate Mg(2+): Asp461, Asp463, and Asp465. Zn(2+)-binding residues include Cys809, Cys883, Cys890, and Cys893.

The protein belongs to the RNA polymerase beta' chain family. As to quaternary structure, the RNAP catalytic core consists of 2 alpha, 1 beta, 1 beta' and 1 omega subunit. When a sigma factor is associated with the core the holoenzyme is formed, which can initiate transcription. Requires Mg(2+) as cofactor. Zn(2+) is required as a cofactor.

It carries out the reaction RNA(n) + a ribonucleoside 5'-triphosphate = RNA(n+1) + diphosphate. In terms of biological role, DNA-dependent RNA polymerase catalyzes the transcription of DNA into RNA using the four ribonucleoside triphosphates as substrates. In Ehrlichia ruminantium (strain Gardel), this protein is DNA-directed RNA polymerase subunit beta'.